The sequence spans 75 residues: UPF0352 protein YejL (75 aa).

It belongs to the UPF0352 family.

This Salmonella arizonae (strain ATCC BAA-731 / CDC346-86 / RSK2980) protein is UPF0352 protein YejL.